The primary structure comprises 79 residues: uncharacterized protein (79 aa).

This sequence belongs to the BolA/IbaG family.

This is an uncharacterized protein from Buchnera aphidicola subsp. Baizongia pistaciae (strain Bp).